Reading from the N-terminus, the 304-residue chain is uncharacterized protein (304 aa).

72–79 lines the ATP pocket; sequence GPTGSGKT.

The protein belongs to the CbbQ/NirQ/NorQ/GpvN family.

This is an uncharacterized protein from Bacillus subtilis (strain 168).